The following is a 317-amino-acid chain: Putative AP2/ERF and B3 domain-containing protein Os01g0140700 (317 aa).

The tract at residues 1-37 (MEQEAAMVVFSCNSGSGGSSSTTDSKQEEEEEEELAA) is disordered. Residues 27-37 (QEEEEEEELAA) show a composition bias toward acidic residues. Residues 66 to 121 (RYKGVVPQPNGRWGAQIYERHARVWLGTFPDEEAAARAYDVAALRFRGRDAVTNRA) constitute a DNA-binding region (AP2/ERF). The segment at residues 178–287 (FEKAVTPSDV…EKHLLIDCKK (110 aa)) is a DNA-binding region (TF-B3).

Its subcellular location is the nucleus. The polypeptide is Putative AP2/ERF and B3 domain-containing protein Os01g0140700 (Oryza sativa subsp. japonica (Rice)).